Consider the following 239-residue polypeptide: Enolase-phosphatase E1 (239 aa).

Residues D13 and E15 each contribute to the Mg(2+) site. Substrate is bound by residues S133 to S134 and K170. Mg(2+) is bound at residue D196.

The protein belongs to the HAD-like hydrolase superfamily. MasA/MtnC family. In terms of assembly, monomer. The cofactor is Mg(2+).

It localises to the cytoplasm. It is found in the nucleus. The enzyme catalyses 5-methylsulfanyl-2,3-dioxopentyl phosphate + H2O = 1,2-dihydroxy-5-(methylsulfanyl)pent-1-en-3-one + phosphate. It participates in amino-acid biosynthesis; L-methionine biosynthesis via salvage pathway; L-methionine from S-methyl-5-thio-alpha-D-ribose 1-phosphate: step 3/6. It functions in the pathway amino-acid biosynthesis; L-methionine biosynthesis via salvage pathway; L-methionine from S-methyl-5-thio-alpha-D-ribose 1-phosphate: step 4/6. Bifunctional enzyme that catalyzes the enolization of 2,3-diketo-5-methylthiopentyl-1-phosphate (DK-MTP-1-P) into the intermediate 2-hydroxy-3-keto-5-methylthiopentenyl-1-phosphate (HK-MTPenyl-1-P), which is then dephosphorylated to form the acireductone 1,2-dihydroxy-3-keto-5-methylthiopentene (DHK-MTPene). This Chaetomium globosum (strain ATCC 6205 / CBS 148.51 / DSM 1962 / NBRC 6347 / NRRL 1970) (Soil fungus) protein is Enolase-phosphatase E1.